Consider the following 823-residue polypeptide: Ciliated left-right organizer ZP-N domains-containing protein (823 aa).

Residues 1-22 (MWGSPALAWAVWLACVQPTVFP) form the signal peptide. Disordered regions lie at residues 206–242 (MGLY…LLPL), 269–422 (LVHI…DLLH), 434–520 (GPFL…SPSP), and 632–656 (LPRE…EGPG). Residues 216–230 (TVTVQSPRQGLLQRW) are compositionally biased toward pro residues. Low complexity predominate over residues 389-402 (GPETPPAGVPPAAS).

The protein localises to the secreted. Its function is as follows. Plays a role in left-right patterning process. The sequence is that of Ciliated left-right organizer ZP-N domains-containing protein from Homo sapiens (Human).